A 216-amino-acid polypeptide reads, in one-letter code: Acyl-homoserine-lactone synthase (216 aa).

Belongs to the autoinducer synthase family.

It catalyses the reaction a fatty acyl-[ACP] + S-adenosyl-L-methionine = an N-acyl-L-homoserine lactone + S-methyl-5'-thioadenosine + holo-[ACP] + H(+). Required for the synthesis of an acyl-HSL autoinducer that binds to YukR and which is involved in the regulation of motility and morphology. The protein is Acyl-homoserine-lactone synthase (yukI) of Yersinia ruckeri.